The primary structure comprises 437 residues: Cytochrome c biogenesis protein Ccs1 (437 aa).

Transmembrane regions (helical) follow at residues Leu-23–Ile-43, Thr-82–Ser-102, and Leu-168–Leu-188.

This sequence belongs to the Ccs1/CcsB family. In terms of assembly, may interact with CcsA.

It localises to the plastid. It is found in the chloroplast thylakoid membrane. In terms of biological role, required during biogenesis of c-type cytochromes (cytochrome c6 and cytochrome f) at the step of heme attachment. This chain is Cytochrome c biogenesis protein Ccs1, found in Porphyra purpurea (Red seaweed).